A 233-amino-acid polypeptide reads, in one-letter code: Large ribosomal subunit protein uL1 (233 aa).

This sequence belongs to the universal ribosomal protein uL1 family. As to quaternary structure, part of the 50S ribosomal subunit.

Its function is as follows. Binds directly to 23S rRNA. The L1 stalk is quite mobile in the ribosome, and is involved in E site tRNA release. Protein L1 is also a translational repressor protein, it controls the translation of the L11 operon by binding to its mRNA. This Campylobacter jejuni subsp. doylei (strain ATCC BAA-1458 / RM4099 / 269.97) protein is Large ribosomal subunit protein uL1.